A 33-amino-acid polypeptide reads, in one-letter code: DCLKFGWKCNPRNDKCCSGLKCGSNHNWCKLHI.

Intrachain disulfides connect C2/C17, C9/C22, and C16/C29. Position 33 is an isoleucine amide (I33).

Belongs to the neurotoxin 10 (Hwtx-1) family. 55 (ProTx-III) subfamily. As to expression, expressed by the venom gland.

It is found in the secreted. Functionally, inhibits voltage-gated sodium channels without significantly altering the voltage dependence of activation or inactivation. Preferentially inhibits human Nav1.7/SCN9A (IC(50)=2.1 nM) &gt; human Nav1.6/SCN8A &gt; human Nav1.2/SCN2A &gt; human Nav1.1/SCN1A &gt; human Nav1.3/SCN3A channels. Exhibits analgesic properties by reversing spontaneous pain induced in mice by intraplantar injection with OD1 (AC P84646), a scorpion toxin that potentiates human Nav1.7/SCN9A. The sequence is that of Mu-theraphotoxin-Tp1a from Thrixopelma pruriens (Peruvian green velvet tarantula).